A 133-amino-acid chain; its full sequence is Small ribosomal subunit protein uS8 (133 aa).

Belongs to the universal ribosomal protein uS8 family. Part of the 30S ribosomal subunit. Contacts proteins S5 and S12.

Functionally, one of the primary rRNA binding proteins, it binds directly to 16S rRNA central domain where it helps coordinate assembly of the platform of the 30S subunit. In Rhodopirellula baltica (strain DSM 10527 / NCIMB 13988 / SH1), this protein is Small ribosomal subunit protein uS8.